The primary structure comprises 258 residues: Probable N-acetylglucosaminyl-phosphatidylinositol de-N-acetylase (258 aa).

The tract at residues 147–170 (KSSSTTTTSTTSSSSSSSSLSNRT) is disordered. The segment covering 148–170 (SSSTTTTSTTSSSSSSSSLSNRT) has biased composition (low complexity).

Belongs to the PIGL family.

It is found in the endoplasmic reticulum membrane. The catalysed reaction is a 6-(N-acetyl-alpha-D-glucosaminyl)-1-(1,2-diacyl-sn-glycero-3-phospho)-1D-myo-inositol + H2O = a 6-(alpha-D-glucosaminyl)-1-(1,2-diacyl-sn-glycero-3-phospho)-1D-myo-inositol + acetate. Its pathway is glycolipid biosynthesis; glycosylphosphatidylinositol-anchor biosynthesis. Involved in the second step of GPI biosynthesis. De-N-acetylation of N-acetylglucosaminyl-phosphatidylinositol. The chain is Probable N-acetylglucosaminyl-phosphatidylinositol de-N-acetylase (pigl) from Dictyostelium discoideum (Social amoeba).